The sequence spans 467 residues: MSLSLWQQCLARLQDELPATEFSMWIRPLQAELSDNTLALYAPNRFVLDWVRDKYLNNINGLLTSFCGADAPQLRFEVGTKSVTQTPQAAVTSNVAAPAQVAQTQPQRAAPSTRSGWDNVPAPAEPTYRSNVNVKHTFDNFVEGKSNQLARAAARQVADNPGGAYNPLFLYGGTGLGKTHLLHAVGNGIMARKPNAKVVYMHSERFVQDMVKALQNNAIEEFKRYYRSVDALLIDDIQFFANKERSQEEFFHTFNALLEGNQQIILTSDRYPKEINGVEDRLKSRFGWGLTVAIEPPELETRVAILMKKADENDIRLPGEVAFFIAKRLRSNVRELEGALNRVIANANFTGRAITIDFVREALRDLLALQEKLVTIDNIQKTVAEYYKIKVADLLSKRRSRSVARPRQMAMALAKELTNHSLPEIGDAFGGRDHTTVLHACRKIEQLREESHDIKEDFSNLIRTLSS.

Residues 1–90 (MSLSLWQQCL…KSVTQTPQAA (90 aa)) are domain I, interacts with DnaA modulators. The segment at 91–130 (VTSNVAAPAQVAQTQPQRAAPSTRSGWDNVPAPAEPTYRS) is domain II. Residues 97–111 (APAQVAQTQPQRAAP) are compositionally biased toward low complexity. Residues 97 to 119 (APAQVAQTQPQRAAPSTRSGWDN) are disordered. The segment at 131–347 (NVNVKHTFDN…GALNRVIANA (217 aa)) is domain III, AAA+ region. ATP is bound by residues Gly-175, Gly-177, Lys-178, and Thr-179. The domain IV, binds dsDNA stretch occupies residues 348–467 (NFTGRAITID…FSNLIRTLSS (120 aa)).

Belongs to the DnaA family. In terms of assembly, oligomerizes as a right-handed, spiral filament on DNA at oriC.

Its subcellular location is the cytoplasm. In terms of biological role, plays an essential role in the initiation and regulation of chromosomal replication. ATP-DnaA binds to the origin of replication (oriC) to initiate formation of the DNA replication initiation complex once per cell cycle. Binds the DnaA box (a 9 base pair repeat at the origin) and separates the double-stranded (ds)DNA. Forms a right-handed helical filament on oriC DNA; dsDNA binds to the exterior of the filament while single-stranded (ss)DNA is stabiized in the filament's interior. The ATP-DnaA-oriC complex binds and stabilizes one strand of the AT-rich DNA unwinding element (DUE), permitting loading of DNA polymerase. After initiation quickly degrades to an ADP-DnaA complex that is not apt for DNA replication. Binds acidic phospholipids. The chain is Chromosomal replication initiator protein DnaA from Escherichia coli O157:H7.